Here is a 715-residue protein sequence, read N- to C-terminus: Probable GTP diphosphokinase RSH3, chloroplastic (715 aa).

A chloroplast-targeting transit peptide spans 1–64 (MVVATTIALY…LLFSGASVKS (64 aa)). Residues 65 to 74 (SSSSSSSHPS) are compositionally biased toward low complexity. Residues 65 to 84 (SSSSSSSHPSVGEELASIRH) are disordered. The region spanning 237–341 (YLQHCVETAM…IKLADRLHNM (105 aa)) is the HD domain.

Belongs to the RelA/SpoT family. In terms of tissue distribution, expressed in roots, hypocotyls, shoots, cotyledons, rosette and cauline leaves, stems, petals, sepals, stamens, pistils and siliques.

The protein resides in the plastid. It is found in the chloroplast. It catalyses the reaction GTP + ATP = guanosine 3'-diphosphate 5'-triphosphate + AMP. Possesses ppGpp (guanosine 3'-diphosphate 5'-diphosphate) synthetase activity in vitro and is able to functionally complement E.coli relA mutants. May be involved in a rapid plant ppGpp-mediated response to pathogens and other stresses. The sequence is that of Probable GTP diphosphokinase RSH3, chloroplastic (RSH3) from Arabidopsis thaliana (Mouse-ear cress).